A 237-amino-acid polypeptide reads, in one-letter code: Ribonuclease PH (237 aa).

Phosphate is bound by residues arginine 86 and 124–126; that span reads GTR.

This sequence belongs to the RNase PH family. As to quaternary structure, homohexameric ring arranged as a trimer of dimers.

The enzyme catalyses tRNA(n+1) + phosphate = tRNA(n) + a ribonucleoside 5'-diphosphate. Phosphorolytic 3'-5' exoribonuclease that plays an important role in tRNA 3'-end maturation. Removes nucleotide residues following the 3'-CCA terminus of tRNAs; can also add nucleotides to the ends of RNA molecules by using nucleoside diphosphates as substrates, but this may not be physiologically important. Probably plays a role in initiation of 16S rRNA degradation (leading to ribosome degradation) during starvation. The chain is Ribonuclease PH from Shewanella frigidimarina (strain NCIMB 400).